The following is a 334-amino-acid chain: Heat-inducible transcription repressor HrcA (334 aa).

The protein belongs to the HrcA family.

Functionally, negative regulator of class I heat shock genes (grpE-dnaK-dnaJ and groELS operons). Prevents heat-shock induction of these operons. The polypeptide is Heat-inducible transcription repressor HrcA (Acidovorax sp. (strain JS42)).